The chain runs to 502 residues: Cobyric acid synthase (502 aa).

The region spanning 260 to 433 (VLRVAVCAVP…WHGSLESDGF (174 aa)) is the GATase cobBQ-type domain. Residue cysteine 341 is the Nucleophile of the active site. Residue histidine 425 is part of the active site.

It belongs to the CobB/CobQ family. CobQ subfamily.

Its pathway is cofactor biosynthesis; adenosylcobalamin biosynthesis. In terms of biological role, catalyzes amidations at positions B, D, E, and G on adenosylcobyrinic A,C-diamide. NH(2) groups are provided by glutamine, and one molecule of ATP is hydrogenolyzed for each amidation. The polypeptide is Cobyric acid synthase (Streptomyces coelicolor (strain ATCC BAA-471 / A3(2) / M145)).